Reading from the N-terminus, the 201-residue chain is Ras-related protein Rab-9B (201 aa).

GTP is bound by residues V18, G19, K20, S21, S22, D33, S34, A36, H38, and T39. S21 provides a ligand contact to Mg(2+). Residues 31–42 carry the Switch 1 motif; that stretch reads KFDSQAFHTIGV. Residue S34 is modified to Phosphoserine. Mg(2+)-binding residues include T39 and D62. A Switch 2 motif is present at residues 64 to 78; sequence AGQERFKSLRTPFYR. GTP is bound by residues G65, N124, K125, A155, and K156. S-geranylgeranyl cysteine attachment occurs at residues C200 and C201.

It belongs to the small GTPase superfamily. Rab family. In terms of assembly, interacts (GTP-bound form) with SGSM1; the GDP-bound form has much lower affinity for SGSM1. The GTP-bound form but not the GDP-bound form interacts with HPS4 and the BLOC-3 complex (heterodimer of HPS1 and HPS4) but does not interact with HPS1 alone. Interacts (GTP-bound form) with NDE1. Mg(2+) is required as a cofactor. Ubiquitous.

The protein resides in the cell membrane. It is found in the cytoplasmic vesicle. The protein localises to the phagosome. It localises to the phagosome membrane. It catalyses the reaction GTP + H2O = GDP + phosphate + H(+). Regulated by guanine nucleotide exchange factors (GEFs) which promote the exchange of bound GDP for free GTP. Regulated by GTPase activating proteins (GAPs) which increase the GTP hydrolysis activity. Inhibited by GDP dissociation inhibitors (GDIs). The small GTPases Rab are key regulators of intracellular membrane trafficking, from the formation of transport vesicles to their fusion with membranes. Rabs cycle between an inactive GDP-bound form and an active GTP-bound form that is able to recruit to membranes different sets of downstream effectors directly responsible for vesicle formation, movement, tethering and fusion. RAB9B is involved in the transport of proteins between the endosomes and the trans Golgi network. May use NDE1/NDEL1 as an effector to interact with the dynein motor complex in order to control retrograde trafficking of RAB9-associated late endosomes to the TGN. The polypeptide is Ras-related protein Rab-9B (Homo sapiens (Human)).